A 61-amino-acid polypeptide reads, in one-letter code: Large ribosomal subunit protein uL29 (61 aa).

This sequence belongs to the universal ribosomal protein uL29 family.

This is Large ribosomal subunit protein uL29 from Xanthomonas euvesicatoria pv. vesicatoria (strain 85-10) (Xanthomonas campestris pv. vesicatoria).